The sequence spans 407 residues: Serpin-Z2 (407 aa).

The segment at 1 to 28 (MDSKRKNQELSTSETADPSLSKTNKKQK) is disordered. A compositionally biased stretch (polar residues) spans 9–22 (ELSTSETADPSLSK). Positions 344–368 (GTEAAAATTVVVVTGSCLWEPKKKI) are RCL.

The protein belongs to the serpin family.

Functionally, probable serine protease inhibitor. This chain is Serpin-Z2, found in Arabidopsis thaliana (Mouse-ear cress).